We begin with the raw amino-acid sequence, 91 residues long: Small ribosomal subunit protein uS17 (91 aa).

The protein belongs to the universal ribosomal protein uS17 family. In terms of assembly, part of the 30S ribosomal subunit.

In terms of biological role, one of the primary rRNA binding proteins, it binds specifically to the 5'-end of 16S ribosomal RNA. The chain is Small ribosomal subunit protein uS17 from Salinispora arenicola (strain CNS-205).